Here is a 324-residue protein sequence, read N- to C-terminus: Probable UDP-sugar transporter protein SLC35A4 (324 aa).

Topologically, residues 1 to 18 are cytoplasmic; sequence MSVEDGGMPGLARPKQAR. A helical membrane pass occupies residues 19–39; it reads WTLMLFLSTAMYGAHAPFLAL. At 40-52 the chain is on the lumenal side; it reads CHVDGRVPFRPSS. Residues 53 to 73 form a helical membrane-spanning segment; that stretch reads AVLLTELTKLLLCAFSLLVGW. The Cytoplasmic portion of the chain corresponds to 74–85; that stretch reads QTWPQGTPPWRQ. The helical transmembrane segment at 86 to 106 threads the bilayer; it reads AAPFALSALLYGANNNLVIYL. The Lumenal segment spans residues 107–142; that stretch reads QRYMDPSTYQVLSNLKIGSTALLYCLCLGHRLSARQ. The chain crosses the membrane as a helical span at residues 143 to 163; it reads GLALLLLMAAGACYASGGFQE. Topologically, residues 164–180 are cytoplasmic; it reads PGNTLPGPRSAAGARPM. The helical transmembrane segment at 181–201 threads the bilayer; the sequence is PLHITPLGLLLLILYCLISGL. Residues 202–214 lie on the Lumenal side of the membrane; sequence SSVYTELIMKRQR. The chain crosses the membrane as a helical span at residues 215 to 235; sequence LPLALQNLFLYTFGVILNLGL. At 236 to 248 the chain is on the cytoplasmic side; the sequence is YAGSGPGPGFLEG. The chain crosses the membrane as a helical span at residues 249-271; the sequence is FSGWAVLVVLNQAVNGLLMSAVM. Residues 272–279 are Lumenal-facing; the sequence is KHGSSITR. The chain crosses the membrane as a helical span at residues 280 to 300; the sequence is LFIVSCSLVVNAVLSAVLLQL. The Cytoplasmic portion of the chain corresponds to 301 to 324; sequence QLTATFFLAALLIGLAVCLYYGSP.

Belongs to the nucleotide-sugar transporter family. SLC35A subfamily. Found in a complex with SLC35A2 and SLC35A3. Expressed in the kidney, lung, testis, and prostate. Expressed in the brain by sets of neurons, such as the pyramidal cells of the cortex, the Purkinje cells of the cerebellum, and the motoneurons of the brainstem.

Its subcellular location is the golgi apparatus membrane. The enzyme catalyses CDP-L-ribitol(in) + CDP(out) = CDP-L-ribitol(out) + CDP(in). Functionally, mediates the transport of CDP-ribitol. Does not exhibit CMP-sialic acid, UDP-galactose and UDP-N-acetylglucosamine transport activity. This chain is Probable UDP-sugar transporter protein SLC35A4, found in Rattus norvegicus (Rat).